A 117-amino-acid chain; its full sequence is NLIQFSNMIKCAIPGSRPLFQYADYGCYCGPGGHGTPVDELDRCCKIHDDCYGEAGKKGCFPKLTLYSWKCTEKVPTCNAKSRCKDFVCACDAEAAKCFAKAPYIKENYNINTKTRC.

Disulfide bonds link Cys11-Cys71, Cys27-Cys117, Cys29-Cys45, Cys44-Cys98, Cys51-Cys91, Cys60-Cys84, and Cys78-Cys89. Tyr28, Gly30, and Gly32 together coordinate Ca(2+). His48 is a catalytic residue. Asp49 contributes to the Ca(2+) binding site. The active site involves Asp92.

Belongs to the phospholipase A2 family. Group I subfamily. D49 sub-subfamily. Ca(2+) is required as a cofactor. Expressed by the venom gland.

It is found in the secreted. The catalysed reaction is a 1,2-diacyl-sn-glycero-3-phosphocholine + H2O = a 1-acyl-sn-glycero-3-phosphocholine + a fatty acid + H(+). Its function is as follows. PLA2 catalyzes the calcium-dependent hydrolysis of the 2-acyl groups in 3-sn-phosphoglycerides. This chain is Basic phospholipase A2 pseudexin B chain, found in Pseudechis porphyriacus (Red-bellied black snake).